The primary structure comprises 240 residues: Ribonuclease 3 (240 aa).

The region spanning 9–141 (VEEFQKKTGI…LLAAIYLDQG (133 aa)) is the RNase III domain. Glu54 is a binding site for Mg(2+). Asp58 is a catalytic residue. Asp127 and Glu130 together coordinate Mg(2+). Glu130 is a catalytic residue. The region spanning 168-237 (DYKTALQEIV…ARIAYEKLLK (70 aa)) is the DRBM domain.

This sequence belongs to the ribonuclease III family. In terms of assembly, homodimer. Requires Mg(2+) as cofactor.

The protein localises to the cytoplasm. It carries out the reaction Endonucleolytic cleavage to 5'-phosphomonoester.. Functionally, digests double-stranded RNA. Involved in the processing of primary rRNA transcript to yield the immediate precursors to the large and small rRNAs (23S and 16S). Processes some mRNAs, and tRNAs when they are encoded in the rRNA operon. Processes pre-crRNA and tracrRNA of type II CRISPR loci if present in the organism. The protein is Ribonuclease 3 of Thermotoga petrophila (strain ATCC BAA-488 / DSM 13995 / JCM 10881 / RKU-1).